The chain runs to 506 residues: NADH-quinone oxidoreductase subunit N 2 (506 aa).

14 consecutive transmembrane segments (helical) span residues 11-31 (SLAY…LVVW), 44-64 (LVIL…YFLA), 82-102 (FSNL…LFLV), 117-137 (SGEL…MAAS), 140-160 (LLLI…LAGF), 175-195 (VIFG…IFGI), 222-242 (VFVG…AAPF), 254-274 (PTPV…AVLI), 289-309 (GVAT…MTVG), 323-345 (LAYS…SGAG), 356-376 (YCFM…ESGG), 394-414 (AAAM…AGFI), 419-439 (LFSA…VVGV), and 472-492 (LLGG…VYWG).

This sequence belongs to the complex I subunit 2 family. In terms of assembly, NDH-1 is composed of 14 different subunits. Subunits NuoA, H, J, K, L, M, N constitute the membrane sector of the complex.

It localises to the cell inner membrane. The catalysed reaction is a quinone + NADH + 5 H(+)(in) = a quinol + NAD(+) + 4 H(+)(out). Functionally, NDH-1 shuttles electrons from NADH, via FMN and iron-sulfur (Fe-S) centers, to quinones in the respiratory chain. The immediate electron acceptor for the enzyme in this species is believed to be ubiquinone. Couples the redox reaction to proton translocation (for every two electrons transferred, four hydrogen ions are translocated across the cytoplasmic membrane), and thus conserves the redox energy in a proton gradient. This chain is NADH-quinone oxidoreductase subunit N 2, found in Sorangium cellulosum (strain So ce56) (Polyangium cellulosum (strain So ce56)).